The following is a 552-amino-acid chain: ATP synthase subunit alpha, mitochondrial (552 aa).

The N-terminal 47 residues, 1-47, are a transit peptide targeting the mitochondrion; that stretch reads MSIFSARLASSVARNLPKAANQVACKAAYPAASLAARKLHVASTQRS. Residue 211 to 218 participates in ATP binding; the sequence is GDRQTGKT.

Belongs to the ATPase alpha/beta chains family. As to quaternary structure, F-type ATPases have 2 components, CF(1) - the catalytic core - and CF(0) - the membrane proton channel. CF(1) has five subunits: alpha(3), beta(3), gamma(1), delta(1), epsilon(1). CF(0) has three main subunits: a, b and c.

It is found in the mitochondrion inner membrane. Mitochondrial membrane ATP synthase (F(1)F(0) ATP synthase or Complex V) produces ATP from ADP in the presence of a proton gradient across the membrane which is generated by electron transport complexes of the respiratory chain. F-type ATPases consist of two structural domains, F(1) - containing the extramembraneous catalytic core, and F(0) - containing the membrane proton channel, linked together by a central stalk and a peripheral stalk. During catalysis, ATP synthesis in the catalytic domain of F(1) is coupled via a rotary mechanism of the central stalk subunits to proton translocation. Subunits alpha and beta form the catalytic core in F(1). Rotation of the central stalk against the surrounding alpha(3)beta(3) subunits leads to hydrolysis of ATP in three separate catalytic sites on the beta subunits. Subunit alpha does not bear the catalytic high-affinity ATP-binding sites. The sequence is that of ATP synthase subunit alpha, mitochondrial (blw) from Drosophila melanogaster (Fruit fly).